A 225-amino-acid polypeptide reads, in one-letter code: Biosynthetic peptidoglycan transglycosylase (225 aa).

The helical transmembrane segment at 8-28 (VLLIFIGAILLIQLWIFSSLV) threads the bilayer.

This sequence belongs to the glycosyltransferase 51 family.

It localises to the cell inner membrane. The enzyme catalyses [GlcNAc-(1-&gt;4)-Mur2Ac(oyl-L-Ala-gamma-D-Glu-L-Lys-D-Ala-D-Ala)](n)-di-trans,octa-cis-undecaprenyl diphosphate + beta-D-GlcNAc-(1-&gt;4)-Mur2Ac(oyl-L-Ala-gamma-D-Glu-L-Lys-D-Ala-D-Ala)-di-trans,octa-cis-undecaprenyl diphosphate = [GlcNAc-(1-&gt;4)-Mur2Ac(oyl-L-Ala-gamma-D-Glu-L-Lys-D-Ala-D-Ala)](n+1)-di-trans,octa-cis-undecaprenyl diphosphate + di-trans,octa-cis-undecaprenyl diphosphate + H(+). The protein operates within cell wall biogenesis; peptidoglycan biosynthesis. Peptidoglycan polymerase that catalyzes glycan chain elongation from lipid-linked precursors. This is Biosynthetic peptidoglycan transglycosylase from Acinetobacter baumannii (strain AB307-0294).